Here is a 428-residue protein sequence, read N- to C-terminus: Adenylosuccinate synthetase (428 aa).

Residues 12 to 18 and 40 to 42 contribute to the GTP site; these read GDEGKGK and GHT. Asp13 acts as the Proton acceptor in catalysis. Mg(2+) contacts are provided by Asp13 and Gly40. IMP is bound by residues 13-16, 38-41, Thr128, Arg142, Gln222, Thr237, and Arg301; these read DEGK and NAGH. His41 functions as the Proton donor in the catalytic mechanism. Position 297–303 (297–303) interacts with substrate; sequence VNTGRAR. GTP contacts are provided by residues Arg303, 329-331, and 411-413; these read KLD and STS.

The protein belongs to the adenylosuccinate synthetase family. As to quaternary structure, homodimer. Mg(2+) serves as cofactor.

Its subcellular location is the cytoplasm. The enzyme catalyses IMP + L-aspartate + GTP = N(6)-(1,2-dicarboxyethyl)-AMP + GDP + phosphate + 2 H(+). It functions in the pathway purine metabolism; AMP biosynthesis via de novo pathway; AMP from IMP: step 1/2. Its function is as follows. Plays an important role in the de novo pathway of purine nucleotide biosynthesis. Catalyzes the first committed step in the biosynthesis of AMP from IMP. The protein is Adenylosuccinate synthetase of Caulobacter vibrioides (strain ATCC 19089 / CIP 103742 / CB 15) (Caulobacter crescentus).